The chain runs to 510 residues: Chromosomal replication initiator protein DnaA (510 aa).

A domain I, interacts with DnaA modulators region spans residues 1-74; that stretch reads MHTDLWERGC…EATLSELAGK (74 aa). The tract at residues 74–173 is domain II; sequence KPVRLELSLL…PTLSPAVSRG (100 aa). A disordered region spans residues 125 to 168; that stretch reads ARHDPQSVVPTPGGSANGRAAPRVGEPGGPVGTSTLPVAPTLSP. A domain III, AAA+ region region spans residues 174 to 390; it reads RLNPALTFDT…GALRKVLAYS (217 aa). Residues G218, G220, K221, and T222 each coordinate ATP. The interval 391–510 is domain IV, binds dsDNA; that stretch reads RFSHKEISIN…LHVLEQTLKG (120 aa).

This sequence belongs to the DnaA family. Oligomerizes as a right-handed, spiral filament on DNA at oriC.

The protein resides in the cytoplasm. Functionally, plays an essential role in the initiation and regulation of chromosomal replication. ATP-DnaA binds to the origin of replication (oriC) to initiate formation of the DNA replication initiation complex once per cell cycle. Binds the DnaA box (a 9 base pair repeat at the origin) and separates the double-stranded (ds)DNA. Forms a right-handed helical filament on oriC DNA; dsDNA binds to the exterior of the filament while single-stranded (ss)DNA is stabiized in the filament's interior. The ATP-DnaA-oriC complex binds and stabilizes one strand of the AT-rich DNA unwinding element (DUE), permitting loading of DNA polymerase. After initiation quickly degrades to an ADP-DnaA complex that is not apt for DNA replication. Binds acidic phospholipids. The protein is Chromosomal replication initiator protein DnaA of Leptothrix cholodnii (strain ATCC 51168 / LMG 8142 / SP-6) (Leptothrix discophora (strain SP-6)).